A 474-amino-acid chain; its full sequence is 4-aminobutyrate aminotransferase (474 aa).

Positions 1–13 are enriched in polar residues; sequence MSSTATVTESTHF. The tract at residues 1-31 is disordered; it reads MSSTATVTESTHFFPNEPQGPSIKTETIPGP. Pyridoxal 5'-phosphate is bound at residue 142 to 143; sequence GS. Arginine 199 is a binding site for substrate. Position 333 is an N6-(pyridoxal phosphate)lysine (lysine 333). Position 357 (threonine 357) interacts with pyridoxal 5'-phosphate.

This sequence belongs to the class-III pyridoxal-phosphate-dependent aminotransferase family. Homodimer. It depends on pyridoxal 5'-phosphate as a cofactor.

The protein resides in the cytoplasm. It catalyses the reaction 4-aminobutanoate + 2-oxoglutarate = succinate semialdehyde + L-glutamate. In terms of biological role, required for the degradation of gamma-aminobutyric acid (GABA), which is important for utilization of GABA as nitrogen source. Deaminates GABA to succinate-semialdehyde, which in turn is converted to succinate by the succinate semialdehyde dehydrogenase. Cannot transaminate beta-alanine (BAL). The polypeptide is 4-aminobutyrate aminotransferase (uga1) (Schizosaccharomyces pombe (strain 972 / ATCC 24843) (Fission yeast)).